A 138-amino-acid chain; its full sequence is MPTISQLIRKGREVLTEKSTAPALKECPQKRGVCTRVYTTTPKKPNSALRKVARVRLTNGVEVTAYIPGIGHNLQEHSVVLVRGGRVKDLPGVRYHIVRGALDTAGTQNRNQGRSKYGTKRPKKGAATAAKGPVKGKK.

Aspartate 89 carries the 3-methylthioaspartic acid modification. Positions 101 to 138 (ALDTAGTQNRNQGRSKYGTKRPKKGAATAAKGPVKGKK) are disordered. The segment covering 105–114 (AGTQNRNQGR) has biased composition (polar residues). The span at 125–138 (GAATAAKGPVKGKK) shows a compositional bias: low complexity.

The protein belongs to the universal ribosomal protein uS12 family. In terms of assembly, part of the 30S ribosomal subunit. Contacts proteins S8 and S17. May interact with IF1 in the 30S initiation complex.

With S4 and S5 plays an important role in translational accuracy. In terms of biological role, interacts with and stabilizes bases of the 16S rRNA that are involved in tRNA selection in the A site and with the mRNA backbone. Located at the interface of the 30S and 50S subunits, it traverses the body of the 30S subunit contacting proteins on the other side and probably holding the rRNA structure together. The combined cluster of proteins S8, S12 and S17 appears to hold together the shoulder and platform of the 30S subunit. The sequence is that of Small ribosomal subunit protein uS12 from Heliobacterium modesticaldum (strain ATCC 51547 / Ice1).